We begin with the raw amino-acid sequence, 437 residues long: Homogentisate 1,2-dioxygenase (437 aa).

The active-site Proton acceptor is the histidine 295. The Fe cation site is built by histidine 338 and glutamate 344. Residues tyrosine 353 and histidine 374 each contribute to the homogentisate site. A Fe cation-binding site is contributed by histidine 374.

The protein belongs to the homogentisate dioxygenase family. In terms of assembly, hexamer; dimer of trimers. Requires Fe cation as cofactor.

The catalysed reaction is homogentisate + O2 = 4-maleylacetoacetate + H(+). The protein operates within amino-acid degradation; L-phenylalanine degradation; acetoacetate and fumarate from L-phenylalanine: step 4/6. Its function is as follows. Involved in the catabolism of homogentisate (2,5-dihydroxyphenylacetate or 2,5-OH-PhAc), a central intermediate in the degradation of phenylalanine and tyrosine. Catalyzes the oxidative ring cleavage of the aromatic ring of homogentisate to yield maleylacetoacetate. This is Homogentisate 1,2-dioxygenase from Myxococcus xanthus (strain DK1622).